We begin with the raw amino-acid sequence, 103 residues long: Large ribosomal subunit protein uL23 (103 aa).

The protein belongs to the universal ribosomal protein uL23 family. In terms of assembly, part of the 50S ribosomal subunit. Contacts protein L29, and trigger factor when it is bound to the ribosome.

One of the early assembly proteins it binds 23S rRNA. One of the proteins that surrounds the polypeptide exit tunnel on the outside of the ribosome. Forms the main docking site for trigger factor binding to the ribosome. This chain is Large ribosomal subunit protein uL23, found in Chlorobium phaeobacteroides (strain DSM 266 / SMG 266 / 2430).